Here is a 105-residue protein sequence, read N- to C-terminus: Large ribosomal subunit protein uL24 (105 aa).

Basic and acidic residues predominate over residues 77–93 (DGKPTRVGYRKDDETGK). The segment at 77 to 105 (DGKPTRVGYRKDDETGKNVRIAKSNGKDL) is disordered.

Belongs to the universal ribosomal protein uL24 family. As to quaternary structure, part of the 50S ribosomal subunit.

Its function is as follows. One of two assembly initiator proteins, it binds directly to the 5'-end of the 23S rRNA, where it nucleates assembly of the 50S subunit. In terms of biological role, one of the proteins that surrounds the polypeptide exit tunnel on the outside of the subunit. This is Large ribosomal subunit protein uL24 from Mycolicibacterium gilvum (strain PYR-GCK) (Mycobacterium gilvum (strain PYR-GCK)).